We begin with the raw amino-acid sequence, 203 residues long: Orotate phosphoribosyltransferase (203 aa).

Residues arginine 94, lysine 98, histidine 100, and 120–128 (EDLISTGGS) each bind 5-phospho-alpha-D-ribose 1-diphosphate. Residue serine 124 coordinates orotate.

The protein belongs to the purine/pyrimidine phosphoribosyltransferase family. PyrE subfamily. In terms of assembly, homodimer. It depends on Mg(2+) as a cofactor.

It catalyses the reaction orotidine 5'-phosphate + diphosphate = orotate + 5-phospho-alpha-D-ribose 1-diphosphate. It participates in pyrimidine metabolism; UMP biosynthesis via de novo pathway; UMP from orotate: step 1/2. In terms of biological role, catalyzes the transfer of a ribosyl phosphate group from 5-phosphoribose 1-diphosphate to orotate, leading to the formation of orotidine monophosphate (OMP). This chain is Orotate phosphoribosyltransferase, found in Staphylococcus saprophyticus subsp. saprophyticus (strain ATCC 15305 / DSM 20229 / NCIMB 8711 / NCTC 7292 / S-41).